Here is a 162-residue protein sequence, read N- to C-terminus: MKTVIYPGSFDPPTNGHLDIIQRAARVFDKVIVAVLNNPEKNPMFTVAERRKMLEMITKEYANVEIDDFNGLLVDYVREKQVSIVIKGLRAISDFENEMQMALTNRKLAPDIETIFMMTNHKCSFLSSSVVKEVVAFDGCIEGLVPEQIQDYIIEKRNSQRK.

S9 is a substrate binding site. ATP contacts are provided by residues 9–10 (SF) and H17. Substrate is bound by residues K41, L73, and K87. ATP-binding positions include 88-90 (GLR), E98, and 123-129 (CSFLSSS).

It belongs to the bacterial CoaD family. Homohexamer. The cofactor is Mg(2+).

It localises to the cytoplasm. It catalyses the reaction (R)-4'-phosphopantetheine + ATP + H(+) = 3'-dephospho-CoA + diphosphate. Its pathway is cofactor biosynthesis; coenzyme A biosynthesis; CoA from (R)-pantothenate: step 4/5. In terms of biological role, reversibly transfers an adenylyl group from ATP to 4'-phosphopantetheine, yielding dephospho-CoA (dPCoA) and pyrophosphate. The polypeptide is Phosphopantetheine adenylyltransferase (Natranaerobius thermophilus (strain ATCC BAA-1301 / DSM 18059 / JW/NM-WN-LF)).